Consider the following 441-residue polypeptide: Cysteine--tRNA ligase (441 aa).

Cysteine 24 provides a ligand contact to Zn(2+). Positions proline 26–asparagine 36 match the 'HIGH' region motif. Zn(2+) is bound by residues cysteine 204, histidine 230, and glutamate 234. The short motif at lysine 262–serine 266 is the 'KMSKS' region element. Position 265 (lysine 265) interacts with ATP.

The protein belongs to the class-I aminoacyl-tRNA synthetase family. In terms of assembly, monomer. It depends on Zn(2+) as a cofactor.

The protein resides in the cytoplasm. The enzyme catalyses tRNA(Cys) + L-cysteine + ATP = L-cysteinyl-tRNA(Cys) + AMP + diphosphate. The protein is Cysteine--tRNA ligase of Mesoplasma florum (strain ATCC 33453 / NBRC 100688 / NCTC 11704 / L1) (Acholeplasma florum).